The sequence spans 902 residues: Transcription factor FPSE_08121 (902 aa).

The disordered stretch occupies residues 1 to 47; sequence MVSPDNRPGTQGPSASAHAHDSRVPRKRPGSWDNNPSTAGNRAVKKR. A DNA-binding region (zn(2)-C6 fungal-type) is located at residues 52–81; sequence CVSCRDRKVRCDVVNGGPPCTNCRLDDVDC. 4 disordered regions span residues 92 to 189, 208 to 234, 258 to 277, and 820 to 839; these read NPAR…EAEQ, HCEQ…PANP, ATEA…SANT, and TGVA…PNMT. Residues 120-137 are compositionally biased toward low complexity; the sequence is TDADTAAPGPAPGSASAT. A compositionally biased stretch (acidic residues) spans 168 to 177; it reads ETICDDDENE. Composition is skewed to polar residues over residues 178–187, 220–234, 262–277, and 826–839; these read NNSWHNQQEA, GAAT…PANP, PPSS…SANT, and GQRS…PNMT.

It localises to the nucleus. Functionally, transcription factor; part of the Fusarium detoxification of benzoxazolinone cluster involved in the degradation of benzoxazolinones produced by the host plant. Maize, wheat, and rye produce the 2 benzoxazinone phytoanticipins 2,4-dihy-droxy-7-methoxy-1,4-benzoxazin-3-one (DIMBOA) and 2,4-dihydroxy-1,4-benzoxazin-3-one (DIBOA) that, due to their inherent instability once released, spontaneously degrade to the more stable corresponding benzoxazolinones, 6-methoxy-2-benzoxazolinone (MBOA) and 2-benzoxazolinone (BOA), respectively. FPSE_08121 positively regulates the expression of the FBD cluster gene FPSE_08120 in response to 2-aminophenol (2-AP) treatment and contributes quantitatively to benzoxazolinone tolerance. In Fusarium pseudograminearum (strain CS3096) (Wheat and barley crown-rot fungus), this protein is Transcription factor FPSE_08121.